The chain runs to 889 residues: DNA mismatch repair protein MutS (889 aa).

620–627 (GPNMAGKS) is a binding site for ATP. Residues 812 to 831 (AAAPSGAARRGRPAREKEPG) form a disordered region.

It belongs to the DNA mismatch repair MutS family.

In terms of biological role, this protein is involved in the repair of mismatches in DNA. It is possible that it carries out the mismatch recognition step. This protein has a weak ATPase activity. This is DNA mismatch repair protein MutS from Syntrophobacter fumaroxidans (strain DSM 10017 / MPOB).